The sequence spans 320 residues: MKLAFIIDPLEKLDPGHDSTVAIMEAAQKLGHEVFVTSVGDLAVINGQAWAKLAAVRLQPVILVDGHWQVSQPWSELSKSQWMALTECQAVFMRKDPPVTVQYLYATFILELLAPTKTMVINSPQGLREANEKMYTLQFAAVMPPTVVSLDKGLIRQFLEEHGAAVLKPLGGKAGEGILFLDPGDRNFNSLVEISTQHGKEPVMVQRFLPEAKEGDKRIILLDGDPIGAVNRIPSGAEFRGNMAVGGQVAPTTITSREIEICALLKPKLQADGLYFVGIDVIGGYLTEVNVTSPTGIREIDRLEGVRLGEKVICWLEKQF.

The ATP-grasp domain occupies 133-317; it reads KMYTLQFAAV…LGEKVICWLE (185 aa). ATP is bound at residue 159–215; that stretch reads LEEHGAAVLKPLGGKAGEGILFLDPGDRNFNSLVEISTQHGKEPVMVQRFLPEAKEG. Mg(2+) is bound by residues E288 and N290.

Belongs to the prokaryotic GSH synthase family. Mg(2+) is required as a cofactor. Requires Mn(2+) as cofactor.

The enzyme catalyses gamma-L-glutamyl-L-cysteine + glycine + ATP = glutathione + ADP + phosphate + H(+). It functions in the pathway sulfur metabolism; glutathione biosynthesis; glutathione from L-cysteine and L-glutamate: step 2/2. The sequence is that of Glutathione synthetase from Synechocystis sp. (strain ATCC 27184 / PCC 6803 / Kazusa).